Consider the following 171-residue polypeptide: Transcription antitermination protein NusB (171 aa).

Belongs to the NusB family.

Involved in transcription antitermination. Required for transcription of ribosomal RNA (rRNA) genes. Binds specifically to the boxA antiterminator sequence of the ribosomal RNA (rrn) operons. The polypeptide is Transcription antitermination protein NusB (Brucella ovis (strain ATCC 25840 / 63/290 / NCTC 10512)).